Here is a 310-residue protein sequence, read N- to C-terminus: MKHIHIIDSHTGGEPTRVVVSGFPALGGGTMAERLAVLAREHDRYRAACILEPRGSDVLVGALLCEPVSAGAAAGVIFFNNAGYLGMCGHGTIGLVRTLHHMGRIGPGVHRIETPVGDVEATLHDDLSVSVRNVLAYRHAKDVVVDVPGHGAVTGDVAWGGNWFFLVSDHGQRVAGENVAALAAYASAVRAALERAGVTGRDGAPIDHIELFADDPEYDSRSFVLCPGHAYDRSPCGTGTSAKLACLAADGKLAAGVTWRQASVIGSVFSASYAAAEGGVVPTIRGSAHLSAEATLVIEDDDPFGWGIAS.

Cysteine 88 serves as the catalytic Proton acceptor. Residues 89 to 90, histidine 208, and aspartate 232 contribute to the substrate site; that span reads GH. Cysteine 236 functions as the Proton donor in the catalytic mechanism. Substrate is bound at residue 237 to 238; it reads GT.

Belongs to the proline racemase family. As to quaternary structure, homodimer.

The catalysed reaction is trans-4-hydroxy-L-proline = cis-4-hydroxy-D-proline. Inhibited by iodoacetate, iodoacetamide and by high amounts (10 mM) of pyrrole-2-carboxylic acid (PYC). Not inhibited by PYC at 1 mM. Functionally, allows intracellular utilization of 4-hydroxyproline, one of the major constituents of host collagen, by converting 4-hydroxy-L-proline to 4-hydroxy-D-proline, which can be further metabolized by intracellular 4-hydroxy-D-proline oxidases. This Burkholderia pseudomallei (strain K96243) protein is 4-hydroxyproline epimerase.